The chain runs to 208 residues: WEB family protein At2g17940 (208 aa).

Residues 78–113 (RTLQLNTSLSNRIKTLTQELELGKKEIQRLSRTRSS) are a coiled coil.

It belongs to the WEB family.

This Arabidopsis thaliana (Mouse-ear cress) protein is WEB family protein At2g17940.